Consider the following 95-residue polypeptide: Large ribosomal subunit protein uL23 (95 aa).

It belongs to the universal ribosomal protein uL23 family. Part of the 50S ribosomal subunit. Contacts protein L29, and trigger factor when it is bound to the ribosome.

One of the early assembly proteins it binds 23S rRNA. One of the proteins that surrounds the polypeptide exit tunnel on the outside of the ribosome. Forms the main docking site for trigger factor binding to the ribosome. The protein is Large ribosomal subunit protein uL23 of Anoxybacillus flavithermus (strain DSM 21510 / WK1).